The chain runs to 648 residues: Centrosomal protein of 63 kDa-B (648 aa).

2 coiled-coil regions span residues 19–188 (DSCE…QSHN) and 222–555 (EEEL…DAAS). Ser-559 is modified (phosphoserine; by atm and atr). Positions 611–644 (FLQEEEQRSHELLQRLNAHIEELKQESQRTVEHF) form a coiled coil.

Belongs to the CEP63 family. Phosphorylation at Ser-559 by atm and atr promotes its delocalization from the centrosome and impairs its ability to promote centrosome dependent spindle assembly.

It is found in the cytoplasm. It localises to the cytoskeleton. The protein localises to the microtubule organizing center. The protein resides in the centrosome. Its subcellular location is the centriole. Its function is as follows. Required for normal spindle assembly. Plays a key role in mother-centriole-dependent centriole duplication. Plays a role in DNA damage response. Following DNA damage, such as double-strand breaks (DSBs), is removed from centrosomes; this leads to the inactivation of spindle assembly and delay in mitotic progression. In Xenopus laevis (African clawed frog), this protein is Centrosomal protein of 63 kDa-B (cep63-b).